The primary structure comprises 399 residues: Small ribosomal subunit protein uS3m (399 aa).

The protein belongs to the universal ribosomal protein uS3 family.

It localises to the mitochondrion. Its function is as follows. Essential for mitochondrial protein synthesis and required for the maturation of small ribosomal subunits. This chain is Small ribosomal subunit protein uS3m, found in Penicillium urticae.